Here is a 138-residue protein sequence, read N- to C-terminus: Cellular retinoic acid-binding protein 2 (138 aa).

Positions 21–31 (KVLGVNVMLRK) match the Nuclear localization signal motif. Lysine 102 is covalently cross-linked (Glycyl lysine isopeptide (Lys-Gly) (interchain with G-Cter in SUMO)). 133–135 (RVY) is an all-trans-retinoate binding site.

The protein belongs to the calycin superfamily. Fatty-acid binding protein (FABP) family. As to quaternary structure, interacts with RXR and RARA. Interacts with importin alpha. Sumoylated in response to retinoic acid binding, sumoylation is critical for dissociation from ER and subsequent nuclear translocation.

Its subcellular location is the cytoplasm. It is found in the endoplasmic reticulum. The protein localises to the nucleus. Transports retinoic acid to the nucleus. Regulates the access of retinoic acid to the nuclear retinoic acid receptors. The polypeptide is Cellular retinoic acid-binding protein 2 (CRABP2) (Homo sapiens (Human)).